The sequence spans 242 residues: Glutamate transport ATP-binding protein GluA (242 aa).

One can recognise an ABC transporter domain in the interval 2-236 (IKMTGVQKFF…PQTDRAKDFL (235 aa)). 34-41 (GPSGSGKS) contacts ATP.

The protein belongs to the ABC transporter superfamily. In terms of assembly, the complex is composed of two ATP-binding proteins (GluA), two transmembrane proteins (GluC and GluD) and a solute-binding protein (GluB).

It is found in the cell membrane. It catalyses the reaction a polar amino acid(out) + ATP + H2O = a polar amino acid(in) + ADP + phosphate + H(+). The catalysed reaction is L-glutamate(out) + ATP + H2O = L-glutamate(in) + ADP + phosphate + H(+). In terms of biological role, part of the ABC transporter complex GluABCD involved in glutamate uptake. Probably responsible for energy coupling to the transport system. The sequence is that of Glutamate transport ATP-binding protein GluA from Corynebacterium efficiens (strain DSM 44549 / YS-314 / AJ 12310 / JCM 11189 / NBRC 100395).